A 476-amino-acid chain; its full sequence is Exodeoxyribonuclease 7 large subunit (476 aa).

This sequence belongs to the XseA family. In terms of assembly, heterooligomer composed of large and small subunits.

It is found in the cytoplasm. It carries out the reaction Exonucleolytic cleavage in either 5'- to 3'- or 3'- to 5'-direction to yield nucleoside 5'-phosphates.. In terms of biological role, bidirectionally degrades single-stranded DNA into large acid-insoluble oligonucleotides, which are then degraded further into small acid-soluble oligonucleotides. The chain is Exodeoxyribonuclease 7 large subunit from Bartonella bacilliformis (strain ATCC 35685 / KC583 / Herrer 020/F12,63).